The primary structure comprises 228 residues: 7-cyano-7-deazaguanine synthase (228 aa).

Residue 10-20 (FSGGQDSTTLA) participates in ATP binding. Zn(2+)-binding residues include Cys-190, Cys-205, Cys-208, and Cys-211.

It belongs to the QueC family. It depends on Zn(2+) as a cofactor.

The catalysed reaction is 7-carboxy-7-deazaguanine + NH4(+) + ATP = 7-cyano-7-deazaguanine + ADP + phosphate + H2O + H(+). It functions in the pathway purine metabolism; 7-cyano-7-deazaguanine biosynthesis. In terms of biological role, catalyzes the ATP-dependent conversion of 7-carboxy-7-deazaguanine (CDG) to 7-cyano-7-deazaguanine (preQ(0)). The chain is 7-cyano-7-deazaguanine synthase from Helicobacter pylori (strain HPAG1).